The following is a 249-amino-acid chain: 1-(5-phosphoribosyl)-5-[(5-phosphoribosylamino)methylideneamino] imidazole-4-carboxamide isomerase (249 aa).

Asp-10 serves as the catalytic Proton acceptor. The Proton donor role is filled by Asp-131.

Belongs to the HisA/HisF family.

Its subcellular location is the cytoplasm. It catalyses the reaction 1-(5-phospho-beta-D-ribosyl)-5-[(5-phospho-beta-D-ribosylamino)methylideneamino]imidazole-4-carboxamide = 5-[(5-phospho-1-deoxy-D-ribulos-1-ylimino)methylamino]-1-(5-phospho-beta-D-ribosyl)imidazole-4-carboxamide. The protein operates within amino-acid biosynthesis; L-histidine biosynthesis; L-histidine from 5-phospho-alpha-D-ribose 1-diphosphate: step 4/9. The protein is 1-(5-phosphoribosyl)-5-[(5-phosphoribosylamino)methylideneamino] imidazole-4-carboxamide isomerase of Brevibacillus brevis (strain 47 / JCM 6285 / NBRC 100599).